The sequence spans 344 residues: Anthranilate phosphoribosyltransferase (344 aa).

Residues G84, 87–88, T92, 94–97, 112–120, and S124 contribute to the 5-phospho-alpha-D-ribose 1-diphosphate site; these read GD, NIST, and KHGGRSVSS. G84 lines the anthranilate pocket. S96 lines the Mg(2+) pocket. R170 contacts anthranilate. Mg(2+) is bound by residues D229 and E230.

Belongs to the anthranilate phosphoribosyltransferase family. As to quaternary structure, homodimer. Mg(2+) serves as cofactor.

The catalysed reaction is N-(5-phospho-beta-D-ribosyl)anthranilate + diphosphate = 5-phospho-alpha-D-ribose 1-diphosphate + anthranilate. It functions in the pathway amino-acid biosynthesis; L-tryptophan biosynthesis; L-tryptophan from chorismate: step 2/5. In terms of biological role, catalyzes the transfer of the phosphoribosyl group of 5-phosphorylribose-1-pyrophosphate (PRPP) to anthranilate to yield N-(5'-phosphoribosyl)-anthranilate (PRA). In Janthinobacterium sp. (strain Marseille) (Minibacterium massiliensis), this protein is Anthranilate phosphoribosyltransferase.